Reading from the N-terminus, the 278-residue chain is Large ribosomal subunit protein uL2 (278 aa).

Disordered stretches follow at residues 32-54 (SLCR…TRHI) and 221-278 (RGMT…RNAK). Over residues 232-245 (NGGGEGKSKSGGGR) the composition is skewed to gly residues.

The protein belongs to the universal ribosomal protein uL2 family. As to quaternary structure, part of the 50S ribosomal subunit. Forms a bridge to the 30S subunit in the 70S ribosome.

In terms of biological role, one of the primary rRNA binding proteins. Required for association of the 30S and 50S subunits to form the 70S ribosome, for tRNA binding and peptide bond formation. It has been suggested to have peptidyltransferase activity; this is somewhat controversial. Makes several contacts with the 16S rRNA in the 70S ribosome. In Akkermansia muciniphila (strain ATCC BAA-835 / DSM 22959 / JCM 33894 / BCRC 81048 / CCUG 64013 / CIP 107961 / Muc), this protein is Large ribosomal subunit protein uL2.